Consider the following 624-residue polypeptide: Phosphatidylserine decarboxylase proenzyme 2 (624 aa).

The interval 1-30 is disordered; sequence MGHSPSRHNACGGGGGDGESPPSPLPSRFE. The region spanning 16 to 129 is the C2 domain; sequence GDGESPPSPL…KDLDEHSEVL (114 aa). 2 EF-hand domains span residues 156–191 and 192–227; these read TEQS…FGNK and LAVA…QQEK. Residues D169, N171, D173, E175, E180, D205, N207, D209, and E216 each contribute to the Ca(2+) site. Catalysis depends on charge relay system; for autoendoproteolytic cleavage activity residues D425, H481, and S569. The active-site Schiff-base intermediate with substrate; via pyruvic acid; for decarboxylase activity is the S569. The residue at position 569 (S569) is a Pyruvic acid (Ser); by autocatalysis.

This sequence belongs to the phosphatidylserine decarboxylase family. PSD-B subfamily. Eukaryotic type II sub-subfamily. In terms of assembly, heterodimer of a large membrane-associated beta subunit and a small pyruvoyl-containing alpha subunit. It depends on pyruvate as a cofactor. Post-translationally, is synthesized initially as an inactive proenzyme. Formation of the active enzyme involves a self-maturation process in which the active site pyruvoyl group is generated from an internal serine residue via an autocatalytic post-translational modification. Two non-identical subunits are generated from the proenzyme in this reaction, and the pyruvate is formed at the N-terminus of the alpha chain, which is derived from the carboxyl end of the proenzyme. The autoendoproteolytic cleavage occurs by a canonical serine protease mechanism, in which the side chain hydroxyl group of the serine supplies its oxygen atom to form the C-terminus of the beta chain, while the remainder of the serine residue undergoes an oxidative deamination to produce ammonia and the pyruvoyl prosthetic group on the alpha chain. During this reaction, the Ser that is part of the protease active site of the proenzyme becomes the pyruvoyl prosthetic group, which constitutes an essential element of the active site of the mature decarboxylase.

The protein localises to the vacuole membrane. Its subcellular location is the endoplasmic reticulum membrane. It carries out the reaction a 1,2-diacyl-sn-glycero-3-phospho-L-serine + H(+) = a 1,2-diacyl-sn-glycero-3-phosphoethanolamine + CO2. The protein operates within phospholipid metabolism; phosphatidylethanolamine biosynthesis; phosphatidylethanolamine from CDP-diacylglycerol: step 2/2. Functionally, catalyzes the formation of phosphatidylethanolamine (PtdEtn) from phosphatidylserine (PtdSer). Plays a central role in phospholipid metabolism and in the interorganelle trafficking of phosphatidylserine. The protein is Phosphatidylserine decarboxylase proenzyme 2 of Oryza sativa subsp. japonica (Rice).